Consider the following 301-residue polypeptide: Pseudouridine-5'-phosphate glycosidase (301 aa).

Glutamate 25 acts as the Proton donor in catalysis. Substrate-binding residues include lysine 86 and valine 106. Aspartate 138 is a binding site for Mn(2+). 140 to 142 provides a ligand contact to substrate; sequence SAD. The active-site Nucleophile is lysine 159.

The protein belongs to the pseudouridine-5'-phosphate glycosidase family. In terms of assembly, homotrimer. It depends on Mn(2+) as a cofactor.

The enzyme catalyses D-ribose 5-phosphate + uracil = psi-UMP + H2O. In terms of biological role, catalyzes the reversible cleavage of pseudouridine 5'-phosphate (PsiMP) to ribose 5-phosphate and uracil. Functions biologically in the cleavage direction, as part of a pseudouridine degradation pathway. This Geobacillus kaustophilus (strain HTA426) protein is Pseudouridine-5'-phosphate glycosidase.